An 852-amino-acid chain; its full sequence is Bifunctional uridylyltransferase/uridylyl-removing enzyme (852 aa).

A uridylyltransferase region spans residues M1 to I318. A uridylyl-removing region spans residues D319 to F672. The region spanning V436–L558 is the HD domain. ACT domains lie at Q673–R757 and S785–S852.

Belongs to the GlnD family. Requires Mg(2+) as cofactor.

The enzyme catalyses [protein-PII]-L-tyrosine + UTP = [protein-PII]-uridylyl-L-tyrosine + diphosphate. The catalysed reaction is [protein-PII]-uridylyl-L-tyrosine + H2O = [protein-PII]-L-tyrosine + UMP + H(+). Its activity is regulated as follows. Uridylyltransferase (UTase) activity is inhibited by glutamine, while glutamine activates uridylyl-removing (UR) activity. Its function is as follows. Modifies, by uridylylation and deuridylylation, the PII regulatory proteins (GlnB and homologs), in response to the nitrogen status of the cell that GlnD senses through the glutamine level. Under low glutamine levels, catalyzes the conversion of the PII proteins and UTP to PII-UMP and PPi, while under higher glutamine levels, GlnD hydrolyzes PII-UMP to PII and UMP (deuridylylation). Thus, controls uridylylation state and activity of the PII proteins, and plays an important role in the regulation of nitrogen assimilation and metabolism. This is Bifunctional uridylyltransferase/uridylyl-removing enzyme from Neisseria meningitidis serogroup B (strain ATCC BAA-335 / MC58).